The following is a 337-amino-acid chain: DNA-directed RNA polymerase subunit alpha (337 aa).

The tract at residues 1-233 is alpha N-terminal domain (alpha-NTD); the sequence is MVREKVRVST…DLFIPFLHAE (233 aa). The alpha C-terminal domain (alpha-CTD) stretch occupies residues 267 to 337; sequence IALKSIFIDQ…KAFHNPFTEE (71 aa).

It belongs to the RNA polymerase alpha chain family. As to quaternary structure, in plastids the minimal PEP RNA polymerase catalytic core is composed of four subunits: alpha, beta, beta', and beta''. When a (nuclear-encoded) sigma factor is associated with the core the holoenzyme is formed, which can initiate transcription.

It localises to the plastid. The protein resides in the chloroplast. The enzyme catalyses RNA(n) + a ribonucleoside 5'-triphosphate = RNA(n+1) + diphosphate. In terms of biological role, DNA-dependent RNA polymerase catalyzes the transcription of DNA into RNA using the four ribonucleoside triphosphates as substrates. In Eucalyptus globulus subsp. globulus (Tasmanian blue gum), this protein is DNA-directed RNA polymerase subunit alpha.